Here is a 339-residue protein sequence, read N- to C-terminus: 2'-deoxymugineic-acid 2'-dioxygenase (339 aa).

Positions 184-284 (GGNVILNINH…RTSVATFIMP (101 aa)) constitute a Fe2OG dioxygenase domain. His-209, Asp-211, and His-265 together coordinate Fe cation. Arg-275 is a 2-oxoglutarate binding site.

Belongs to the iron/ascorbate-dependent oxidoreductase family. Fe(2+) is required as a cofactor. The cofactor is L-ascorbate. In terms of processing, the N-terminus is blocked.

The protein resides in the cytoplasm. The enzyme catalyses 2'-deoxymugineate + 2-oxoglutarate + O2 = mugineate + succinate + CO2. In terms of biological role, involved in the biosynthesis of mugineic acid family of phytosiderophores. Hydroxylates the C-2' positions of 2'-deoxymugineic acid (DMA) and 3-epihydroxymugineic acid (epiHDMA). May be involved in boron tolerance. In Hordeum vulgare (Barley), this protein is 2'-deoxymugineic-acid 2'-dioxygenase.